Here is a 124-residue protein sequence, read N- to C-terminus: UPF0342 protein DSY2926 (124 aa).

The protein belongs to the UPF0342 family.

The protein is UPF0342 protein DSY2926 of Desulfitobacterium hafniense (strain Y51).